We begin with the raw amino-acid sequence, 304 residues long: Ribonuclease Z (304 aa).

7 residues coordinate Zn(2+): His-63, His-65, Asp-67, His-68, His-141, Asp-208, and His-266. Residue Asp-67 is the Proton acceptor of the active site.

Belongs to the RNase Z family. In terms of assembly, homodimer. Zn(2+) is required as a cofactor.

It carries out the reaction Endonucleolytic cleavage of RNA, removing extra 3' nucleotides from tRNA precursor, generating 3' termini of tRNAs. A 3'-hydroxy group is left at the tRNA terminus and a 5'-phosphoryl group is left at the trailer molecule.. Zinc phosphodiesterase, which displays some tRNA 3'-processing endonuclease activity. Probably involved in tRNA maturation, by removing a 3'-trailer from precursor tRNA. This chain is Ribonuclease Z, found in Chlamydia trachomatis serovar D (strain ATCC VR-885 / DSM 19411 / UW-3/Cx).